The primary structure comprises 254 residues: MWQLLLPTALLLLVSAGMRTEDLPKAVVFLEPQWYRVLEKDSVTLKCQGAYSPEDNSTQWFHNESLISSQASSYFIDAATVDDSGEYRCQTNLSTLSDPVQLEVHIGWLLLQAPRWVFKEEDPIHLRCHSWKNTALHKVTYLQNGKGRKYFHHNSDFYIPKATLKDSGSYFCRGLFGSKNVSSETVNITITQGLAVSTISSFFPPGYQVSFCLVMVLLFAVDTGLYFSVKTNIRSSTRDWKDHKFKWRKDPQDK.

An N-terminal signal peptide occupies residues 1–16 (MWQLLLPTALLLLVSA). At 17–208 (GMRTEDLPKA…ISSFFPPGYQ (192 aa)) the chain is on the extracellular side. Ig-like C2-type domains lie at 24–105 (PKAV…LEVH) and 107–189 (GWLL…VNIT). The cysteines at positions 47 and 89 are disulfide-linked. 3 N-linked (GlcNAc...) asparagine glycosylation sites follow: Asn56, Asn63, and Asn92. Cys128 and Cys172 are disulfide-bonded. N-linked (GlcNAc...) asparagine glycosylation is found at Asn180 and Asn187. Residues 209–229 (VSFCLVMVLLFAVDTGLYFSV) form a helical membrane-spanning segment. Topologically, residues 230–254 (KTNIRSSTRDWKDHKFKWRKDPQDK) are cytoplasmic. Residue Ser236 is modified to Phosphoserine; by PKC. Thr237 carries the phosphothreonine; by PKC modification.

In terms of assembly, forms a heterooligomeric complex with ITAM-containing signaling subunits, either a homodimer of CD247, a homodimer of FCER1G or a heterodimer of CD247 and FCER1G. Interacts (via transmembrane domain) with signaling subunits; this interaction is a prerequisite for receptor complex expression on the cell surface and intracellular signal transduction. Binds the Fc region of antigen-complexed IgG with a preference for IgG1 and IgG3 isotypes. Interacts with CD2; this interaction is involved in NK cell activation and cytotoxicity. Interacts with S100A4; this interaction inhibits PKC-dependent phosphorylation of FCGR3A. Post-translationally, glycosylated. Contains high mannose- and complex-type oligosaccharides. Glycosylation at Asn-180 is mandatory for high affinity binding to the Fc and for discrimination between fucosylated and afucosylated IgG glycoforms. Undergoes rapid ectodomain shedding upon NK cell stimulation. The soluble form is produced by a proteolytic cleavage mediated by ADAM17. Repeated stimulation causes receptor shedding, a mechanism that allows for increased NK cell motility and detachment from opsonized target cells while avoiding activation-induced NK cell apoptosis. In terms of processing, phosphorylated at RSSTR motif by PKC. The relevant physiological PKCs might be PRKCI, PRKCG, PRKCE, PRKCH and PRKCQ. In terms of tissue distribution, expressed in natural killer cells (at protein level). Expressed in a subset of circulating monocytes (at protein level).

It is found in the cell membrane. The protein resides in the secreted. Receptor for the invariable Fc fragment of immunoglobulin gamma (IgG). Optimally activated upon binding of clustered antigen-IgG complexes displayed on cell surfaces, triggers lysis of antibody-coated cells, a process known as antibody-dependent cellular cytotoxicity (ADCC). Does not bind free monomeric IgG, thus avoiding inappropriate effector cell activation in the absence of antigenic trigger. Mediates IgG effector functions on natural killer (NK) cells. Binds antigen-IgG complexes generated upon infection and triggers NK cell-dependent cytokine production and degranulation to limit viral load and propagation. Involved in the generation of memory-like adaptive NK cells capable to produce high amounts of IFNG and to efficiently eliminate virus-infected cells via ADCC. Regulates NK cell survival and proliferation, in particular by preventing NK cell progenitor apoptosis. Fc-binding subunit that associates with CD247 and/or FCER1G adapters to form functional signaling complexes. Following the engagement of antigen-IgG complexes, triggers phosphorylation of immunoreceptor tyrosine-based activation motif (ITAM)-containing adapters with subsequent activation of phosphatidylinositol 3-kinase signaling and sustained elevation of intracellular calcium that ultimately drive NK cell activation. The ITAM-dependent signaling coupled to receptor phosphorylation by PKC mediates robust intracellular calcium flux that leads to production of pro-inflammatory cytokines, whereas in the absence of receptor phosphorylation it mainly activates phosphatidylinositol 3-kinase signaling leading to cell degranulation. Costimulates NK cells and trigger lysis of target cells independently of IgG binding. Mediates the antitumor activities of therapeutic antibodies. Upon ligation on monocytes triggers TNFA-dependent ADCC of IgG-coated tumor cells. Mediates enhanced ADCC in response to afucosylated IgGs. Its function is as follows. (Microbial infection) Involved in Dengue virus pathogenesis via antibody-dependent enhancement (ADE) mechanism. Secondary infection with Dengue virus triggers elevated levels of afucosylated non-neutralizing IgG1s with reactivity to viral envelope/E protein. Viral antigen-IgG1 complexes bind with high affinity to FCGR3A, facilitating virus entry in myeloid cells and subsequent viral replication. This Homo sapiens (Human) protein is Low affinity immunoglobulin gamma Fc region receptor III-A.